The sequence spans 79 residues: Large ribosomal subunit protein uL24 (79 aa).

The protein belongs to the universal ribosomal protein uL24 family. Part of the 50S ribosomal subunit.

Its function is as follows. One of two assembly initiator proteins, it binds directly to the 5'-end of the 23S rRNA, where it nucleates assembly of the 50S subunit. One of the proteins that surrounds the polypeptide exit tunnel on the outside of the subunit. The sequence is that of Large ribosomal subunit protein uL24 from Lactobacillus delbrueckii subsp. bulgaricus (strain ATCC 11842 / DSM 20081 / BCRC 10696 / JCM 1002 / NBRC 13953 / NCIMB 11778 / NCTC 12712 / WDCM 00102 / Lb 14).